We begin with the raw amino-acid sequence, 379 residues long: Alcohol dehydrogenase class-3 (379 aa).

The residue at position 2 (A2) is an N-acetylalanine. Residue C47 participates in Zn(2+) binding. H48 lines the NAD(+) pocket. The an alcohol site is built by T49 and H69. Zn(2+) is bound by residues H69, E70, C99, C102, C105, C113, and C177. Residues 202–207, D226, K231, I272, 295–297, 320–322, and R372 each bind NAD(+); these read GLGTVG, VGV, and TAF.

Belongs to the zinc-containing alcohol dehydrogenase family. Class-III subfamily. Homodimer. Zn(2+) is required as a cofactor. In terms of tissue distribution, ubiquitous.

It localises to the cytoplasm. The catalysed reaction is a primary alcohol + NAD(+) = an aldehyde + NADH + H(+). It carries out the reaction a secondary alcohol + NAD(+) = a ketone + NADH + H(+). The enzyme catalyses S-(hydroxymethyl)glutathione + NADP(+) = S-formylglutathione + NADPH + H(+). It catalyses the reaction S-(hydroxymethyl)glutathione + NAD(+) = S-formylglutathione + NADH + H(+). The catalysed reaction is S-nitrosoglutathione + NADH + H(+) = S-(hydroxysulfenamide)glutathione + NAD(+). With respect to regulation, repressed by thiol-modifying agents N-ethylmaleimide (NEM) and 5,5-dithio-bis-(2-nitrobenzoic acid) (DTNB), as well as by methyl methanethiosulfonate (MMTS) in a dose-dependent manner. Inhibited by hydrogen peroxide H(2)O(2). Functionally, alcohol dehydrogenase catalyzing the reduction of nitrosoglutathione. Can also use long-chain alcohols including cinnamyl alcohol and geraniol, and, to a lower extent, octanol. Plays a central role in formaldehyde detoxification. Not able to use ethanol (EtOH) as substrate. This chain is Alcohol dehydrogenase class-3, found in Arabidopsis thaliana (Mouse-ear cress).